The following is a 362-amino-acid chain: Phospho-N-acetylmuramoyl-pentapeptide-transferase (362 aa).

10 helical membrane-spanning segments follow: residues 28–48, 75–95, 100–120, 134–154, 170–190, 201–221, 241–261, 265–285, 290–310, and 339–359; these read GAVLTALIVAFLVGPRIIAWL, TMGGFMILLALSVSTLLWADL, VWIVLLVTLGYGLIGFWDDYL, AKLVAEIAIALAAAAWVWSLQ, VLLQLSWFYLPFAVFIIVGAG, GLAIVPVMIASGVFAIFSYLV, LAVFCGALVGAGLGFLWFNAP, VFMGDTGSLALGGALGAISVV, LVLGIVGGLFVLETVSVIVQV, and TVVIRFWIIATILALAGLATL.

The protein belongs to the glycosyltransferase 4 family. MraY subfamily. Requires Mg(2+) as cofactor.

The protein localises to the cell inner membrane. The enzyme catalyses UDP-N-acetyl-alpha-D-muramoyl-L-alanyl-gamma-D-glutamyl-meso-2,6-diaminopimeloyl-D-alanyl-D-alanine + di-trans,octa-cis-undecaprenyl phosphate = di-trans,octa-cis-undecaprenyl diphospho-N-acetyl-alpha-D-muramoyl-L-alanyl-D-glutamyl-meso-2,6-diaminopimeloyl-D-alanyl-D-alanine + UMP. It participates in cell wall biogenesis; peptidoglycan biosynthesis. Catalyzes the initial step of the lipid cycle reactions in the biosynthesis of the cell wall peptidoglycan: transfers peptidoglycan precursor phospho-MurNAc-pentapeptide from UDP-MurNAc-pentapeptide onto the lipid carrier undecaprenyl phosphate, yielding undecaprenyl-pyrophosphoryl-MurNAc-pentapeptide, known as lipid I. The chain is Phospho-N-acetylmuramoyl-pentapeptide-transferase from Paramagnetospirillum magneticum (strain ATCC 700264 / AMB-1) (Magnetospirillum magneticum).